A 293-amino-acid polypeptide reads, in one-letter code: uncharacterized protein (293 aa).

The 58-residue stretch at 1 to 58 (MELKQLITFITAAEHVNFTLTAKMLNYAQSSVTSQIKSLEEEIGTPLFERLGKRLILT) folds into the HTH lysR-type domain. The segment at residues 18 to 37 (FTLTAKMLNYAQSSVTSQIK) is a DNA-binding region (H-T-H motif).

This sequence belongs to the LysR transcriptional regulatory family.

Its subcellular location is the cytoplasm. This is an uncharacterized protein from Bacillus subtilis (strain 168).